The sequence spans 924 residues: Inositol polyphosphate 4-phosphatase type II (924 aa).

The segment covering methionine 1–glutamine 13 has biased composition (basic and acidic residues). Disordered regions lie at residues methionine 1–proline 24, isoleucine 481–tyrosine 516, and aspartate 546–serine 570. The region spanning aspartate 23–leucine 165 is the C2 domain.

Belongs to the inositol 3,4-bisphosphate 4-phosphatase family. In terms of tissue distribution, widely expressed with highest levels occurring in the skeletal muscle and heart.

It catalyses the reaction a 1,2-diacyl-sn-glycero-3-phospho-(1D-myo-inositol-3,4-bisphosphate) + H2O = a 1,2-diacyl-sn-glycero-3-phospho-(1D-myo-inositol-3-phosphate) + phosphate. It carries out the reaction 1D-myo-inositol 1,3,4-trisphosphate + H2O = 1D-myo-inositol 1,3-bisphosphate + phosphate. The catalysed reaction is 1D-myo-inositol 3,4-bisphosphate + H2O = 1D-myo-inositol 3-phosphate + phosphate. The protein operates within signal transduction; phosphatidylinositol signaling pathway. Its activity is regulated as follows. Strongly inhibited by inositol hexakisphosphate. In terms of biological role, catalyzes the hydrolysis of the 4-position phosphate of phosphatidylinositol 3,4-bisphosphate, inositol 1,3,4-trisphosphate and inositol 3,4-trisphosphate. Plays a role in the late stages of macropinocytosis by dephosphorylating phosphatidylinositol 3,4-bisphosphate in membrane ruffles. The lipid phosphatase activity is critical for tumor suppressor function. Antagonizes the PI3K-AKT/PKB signaling pathway by dephosphorylating phosphoinositides and thereby modulating cell cycle progression and cell survival. The polypeptide is Inositol polyphosphate 4-phosphatase type II (INPP4B) (Homo sapiens (Human)).